The sequence spans 718 residues: Probable protein S-acyltransferase 19 (718 aa).

2 helical membrane passes run 16 to 36 and 41 to 61; these read VVAI…FAPF and IWEY…FVLY. The interval 100–125 is disordered; the sequence is ETGSHLQSSPSVASRTSTLPNSSVKG. Over residues 103–124 the composition is skewed to polar residues; sequence SHLQSSPSVASRTSTLPNSSVK. The DHHC domain maps to 174 to 224; it reads LFCTLCNAEVRKFSKHCRSCDKCVDCFDHHCRWLNNCVGRKNYMTFISLMA. Catalysis depends on C204, which acts as the S-palmitoyl cysteine intermediate. A run of 2 helical transmembrane segments spans residues 222-242 and 277-297; these read LMAV…AVIV and AVSM…MLLI. Disordered regions lie at residues 454–511, 598–649, and 664–718; these read SSVS…HVHE, PATT…QQQQ, and GPLV…GTRK. Composition is skewed to polar residues over residues 479–488 and 598–626; these read CRNSYAPSQG and PATT…TQNP. Positions 673–687 are enriched in basic and acidic residues; it reads DGLRHDGDSGREGQD.

Belongs to the DHHC palmitoyltransferase family.

Its subcellular location is the cell membrane. The enzyme catalyses L-cysteinyl-[protein] + hexadecanoyl-CoA = S-hexadecanoyl-L-cysteinyl-[protein] + CoA. In terms of biological role, palmitoyl acyltransferase. The polypeptide is Probable protein S-acyltransferase 19 (PAT19) (Arabidopsis thaliana (Mouse-ear cress)).